Consider the following 1286-residue polypeptide: CLIP-associating protein 2 (1286 aa).

Positions 1-40 are golgi localization; that stretch reads MRRLICKRICDYKSFDDEESVDGNRPSSAASAFKVPAPKT. Phosphoserine occurs at positions 14 and 20. The segment at 17 to 67 is disordered; that stretch reads DEESVDGNRPSSAASAFKVPAPKTPGNPVSSARKPGSAGGPKVGGPSKEGG. Residues 53-67 show a composition bias toward gly residues; that stretch reads SAGGPKVGGPSKEGG. Residues 66 to 317 are TOG 1; it reads GGAGAVDEDD…KSLQTYLKSS (252 aa). HEAT repeat units follow at residues 179–214, 215–251, and 256–293; these read HGAE…IRHT, HVPR…EWQT, and RHAA…HFPG. Residues 320–374 are disordered; the sequence is VASLPQSDRSSSSSQESLNRPFSSKWSTANPSTVAGRVSVGGSKANPLPGSLQRS. Residues S322, S333, and S336 each carry the phosphoserine modification. Over residues 322–340 the composition is skewed to low complexity; sequence SLPQSDRSSSSSQESLNRP. Polar residues predominate over residues 341–352; it reads FSSKWSTANPST. Phosphoserine is present on residues S374, S376, and S413. A disordered region spans residues 411–473; the sequence is YASLEDTSDK…GSRSGSPGRV (63 aa). The segment covering 417–431 has biased composition (basic and acidic residues); that stretch reads TSDKMDGTASDDGRV. Residues 450–565 are interaction with microtubules, MAPRE1 and MAPRE3; that stretch reads RGRSRTKMVS…GPGYGISQSS (116 aa). Residues 459 to 473 are compositionally biased toward low complexity; that stretch reads SQSQPGSRSGSPGRV. Residues S461, S465, S469, S484, and S495 each carry the phosphoserine modification. Residues 493–564 are disordered; that stretch reads SASAQKRSKI…LGPGYGISQS (72 aa). An SXIP motif 1; mediates interaction with MAPRE1 and targeting to microtubule plus ends motif is present at residues 500 to 503; it reads SKIP. S513 carries the post-translational modification Phosphoserine. Residues 523–526 carry the SXIP motif 2; mediates interaction with MAPRE1 and targeting to microtubule plus ends motif; sequence SRIP. Residues S531, S535, S570, S572, S581, S614, and S620 each carry the phosphoserine modification. Basic and acidic residues predominate over residues 605-616; that stretch reads RRYESYGMHSDD. Positions 605–638 are disordered; it reads RRYESYGMHSDDDANSDASSACSERSYSSRNGSI. The segment covering 620–634 has biased composition (low complexity); that stretch reads SDASSACSERSYSSR. The TOG 2 stretch occupies residues 642–873; sequence MRQTEDVAEV…TKLLHNHLRN (232 aa). 2 HEAT repeats span residues 702 to 739 and 764 to 801; these read KVFS…KMGA and LQFN…QMDP. T779 carries the post-translational modification Phosphothreonine. The interval 864-1286 is interaction with RSN and localization to the Golgi and kinetochores; sequence TKLLHNHLRN…DPTADVSGQS (423 aa). 2 disordered regions span residues 870 to 920 and 944 to 989; these read HLRN…FDYD and SFRS…SQPA. Polar residues-rich tracts occupy residues 872–884 and 893–914; these read RNTG…SMGS and SPAN…TLSP. At S884 the chain carries Phosphoserine. Phosphoserine is present on residues S944, S947, S1005, and S1021. The segment covering 947 to 964 has biased composition (basic and acidic residues); that stretch reads SQEDMSEPVRRDPKKEDG. Residues 1009–1286 form a required for cortical localization region; that stretch reads RDYNPYNYSD…DPTADVSGQS (278 aa). HEAT repeat units follow at residues 1046-1083, 1090-1127, and 1208-1245; these read LDHS…TQEE, EHFK…HQPA, and MLLP…VIGD.

Belongs to the CLASP family. In terms of assembly, interacts with microtubules. Interacts with MAPRE1; probably required for targeting to growing microtubule plus ends. Interacts with ERC1, MAPRE3 and PHLDB2. The interaction with ERC1 may be mediated by PHLDB2. Interacts with GCC2; recruits CLASP2 to Golgi membranes. Interacts with CLIP2 and RSN. Interacts with MACF1. Interacts with mtcl2. Interacts with MTCL1. Phosphorylated by GSK3B. Phosphorylation by GSK3B may negatively regulate binding to microtubule lattices in lamella. Isoform 2 is phosphorylated on Ser-241. In terms of tissue distribution, highly expressed in brain and at low levels in heart, kidney and lung.

Its subcellular location is the cytoplasm. It is found in the cytoskeleton. It localises to the microtubule organizing center. The protein resides in the centrosome. The protein localises to the chromosome. Its subcellular location is the centromere. It is found in the kinetochore. It localises to the spindle. The protein resides in the spindle pole. The protein localises to the golgi apparatus. Its subcellular location is the trans-Golgi network. It is found in the cell membrane. It localises to the cell projection. The protein resides in the ruffle membrane. The protein localises to the cell cortex. Microtubule plus-end tracking protein that promotes the stabilization of dynamic microtubules. Involved in the nucleation of noncentrosomal microtubules originating from the trans-Golgi network (TGN). Required for the polarization of the cytoplasmic microtubule arrays in migrating cells towards the leading edge of the cell. May act at the cell cortex to enhance the frequency of rescue of depolymerizing microtubules by attaching their plus-ends to cortical platforms composed of ERC1 and PHLDB2. This cortical microtubule stabilizing activity is regulated at least in part by phosphatidylinositol 3-kinase signaling. Also performs a similar stabilizing function at the kinetochore which is essential for the bipolar alignment of chromosomes on the mitotic spindle. Acts as a mediator of ERBB2-dependent stabilization of microtubules at the cell cortex. The polypeptide is CLIP-associating protein 2 (Clasp2) (Mus musculus (Mouse)).